The chain runs to 397 residues: Enoyl-[acyl-carrier-protein] reductase [NADH] (397 aa).

NAD(+) is bound by residues 48–53, 74–75, 111–112, and 139–140; these read GASTGY, FE, DA, and VA. Tyr225 serves as a coordination point for substrate. Tyr235 serves as the catalytic Proton donor. Residues Lys244 and 273-275 contribute to the NAD(+) site; that span reads VVT.

The protein belongs to the TER reductase family. As to quaternary structure, monomer.

The enzyme catalyses a 2,3-saturated acyl-[ACP] + NAD(+) = a (2E)-enoyl-[ACP] + NADH + H(+). It participates in lipid metabolism; fatty acid biosynthesis. Functionally, involved in the final reduction of the elongation cycle of fatty acid synthesis (FAS II). Catalyzes the reduction of a carbon-carbon double bond in an enoyl moiety that is covalently linked to an acyl carrier protein (ACP). In Burkholderia pseudomallei (strain 1106a), this protein is Enoyl-[acyl-carrier-protein] reductase [NADH].